Reading from the N-terminus, the 428-residue chain is Leucine-rich repeat-containing protein 42 (428 aa).

LRR repeat units follow at residues 149-170 (VLCS…EEIK), 174-195 (ELTC…LEHL), 202-222 (SVTQ…RKMT), 234-255 (NLTL…GYLF), and 259-280 (KLNC…KHKL). The tract at residues 379 to 412 (KHEAISSQESKKSKKRPFEESETEQNNSSQPSKQ) is disordered. Phosphoserine occurs at positions 406 and 407.

The protein belongs to the LRRC42 family.

This is Leucine-rich repeat-containing protein 42 (LRRC42) from Homo sapiens (Human).